We begin with the raw amino-acid sequence, 962 residues long: Putative RNA Helicase B962L (962 aa).

The Helicase ATP-binding domain occupies 43-229 (IPTSLADRVL…FGIGKENIIL (187 aa)). 56 to 63 (SRTGSGKS) provides a ligand contact to ATP. The DEAH box motif lies at 167 to 170 (DEAH). The Helicase C-terminal domain maps to 253 to 459 (ACETALTIHK…TIKKNKEGVF (207 aa)). A helical membrane pass occupies residues 521–541 (GYFWQAAISDIATILAVVSVA).

This sequence belongs to the DEAD box helicase family. DEAH subfamily.

It localises to the host membrane. The protein localises to the virion. It catalyses the reaction ATP + H2O = ADP + phosphate + H(+). The chain is Putative RNA Helicase B962L from African swine fever virus (isolate Warthog/Namibia/Wart80/1980) (ASFV).